The primary structure comprises 267 residues: Myb-related protein Hv1 (267 aa).

HTH myb-type domains are found at residues 9-61 and 62-116; these read KAHT…INYL and RPDL…RRKL. 2 DNA-binding regions (H-T-H motif) span residues 37–61 and 89–112; these read WRSLPKAAGLLRCGKSCRLRWINYL and WSLIAGRLPGRTDNEIKNYWNTHI.

As to expression, germinating seed and apical meristem of shoot and root.

Its subcellular location is the nucleus. Its function is as follows. Possible transcription activator in response to an external signal. May be involved in the regulation of flavonoid biosynthesis. The polypeptide is Myb-related protein Hv1 (MYB1) (Hordeum vulgare (Barley)).